The sequence spans 274 residues: tRNA-cytidine(32) 2-sulfurtransferase (274 aa).

Residues 40–45 (SGGKDS) carry the PP-loop motif motif. Cys115, Cys118, and Cys206 together coordinate [4Fe-4S] cluster.

Belongs to the TtcA family. As to quaternary structure, homodimer. Requires Mg(2+) as cofactor. [4Fe-4S] cluster is required as a cofactor.

Its subcellular location is the cytoplasm. The catalysed reaction is cytidine(32) in tRNA + S-sulfanyl-L-cysteinyl-[cysteine desulfurase] + AH2 + ATP = 2-thiocytidine(32) in tRNA + L-cysteinyl-[cysteine desulfurase] + A + AMP + diphosphate + H(+). The protein operates within tRNA modification. In terms of biological role, catalyzes the ATP-dependent 2-thiolation of cytidine in position 32 of tRNA, to form 2-thiocytidine (s(2)C32). The sulfur atoms are provided by the cysteine/cysteine desulfurase (IscS) system. The protein is tRNA-cytidine(32) 2-sulfurtransferase of Pseudomonas putida (strain GB-1).